The following is a 455-amino-acid chain: Alpha-1,3/1,6-mannosyltransferase ALG2 (455 aa).

The helical transmembrane segment at 73–95 (FGRFYILCAILRQFVLVASLILW) threads the bilayer. Residue asparagine 138 is glycosylated (N-linked (GlcNAc...) asparagine). Residues 434–453 (GAVYLLGAIGVLFACIIYCI) form a helical membrane-spanning segment.

It belongs to the glycosyltransferase group 1 family. Glycosyltransferase 4 subfamily.

Its subcellular location is the endoplasmic reticulum membrane. It catalyses the reaction a beta-D-Man-(1-&gt;4)-beta-D-GlcNAc-(1-&gt;4)-alpha-D-GlcNAc-diphospho-di-trans,poly-cis-dolichol + GDP-alpha-D-mannose = an alpha-D-Man-(1-&gt;3)-beta-D-Man-(1-&gt;4)-beta-D-GlcNAc-(1-&gt;4)-alpha-D-GlcNAc-diphospho-di-trans,poly-cis-dolichol + GDP + H(+). The catalysed reaction is an alpha-D-Man-(1-&gt;3)-beta-D-Man-(1-&gt;4)-beta-D-GlcNAc-(1-&gt;4)-alpha-D-GlcNAc-diphospho-di-trans,poly-cis-dolichol + GDP-alpha-D-mannose = an alpha-D-Man-(1-&gt;3)-[alpha-D-Man-(1-&gt;6)]-beta-D-Man-(1-&gt;4)-beta-D-GlcNAc-(1-&gt;4)-alpha-D-GlcNAc-diphospho-di-trans,poly-cis-dolichol + GDP + H(+). The protein operates within protein modification; protein glycosylation. Its function is as follows. Mannosylates Man(2)GlcNAc(2)-dolichol diphosphate and Man(1)GlcNAc(2)-dolichol diphosphate to form Man(3)GlcNAc(2)-dolichol diphosphate. In Rhizomucor pusillus, this protein is Alpha-1,3/1,6-mannosyltransferase ALG2 (ALG2).